The following is a 278-amino-acid chain: Large ribosomal subunit protein uL2c (278 aa).

The disordered stretch occupies residues 222-241 (GVVMNPNDHPHGGGEGRSPI).

This sequence belongs to the universal ribosomal protein uL2 family. In terms of assembly, part of the 50S ribosomal subunit.

The protein localises to the plastid. The protein resides in the chloroplast. This is Large ribosomal subunit protein uL2c (rpl2) from Tupiella akineta (Green alga).